The sequence spans 1388 residues: Rho-associated protein kinase 2 (1388 aa).

Residues 1-24 (MSRPPPTGKMPGAPEAAAGDGAGA) form a disordered region. One can recognise a Protein kinase domain in the interval 92–354 (YDVVKVIGRG…VEEIKSASFF (263 aa)). ATP contacts are provided by residues 98-106 (IGRGAFGEV) and K121. D214 acts as the Proton acceptor in catalysis. The region spanning 357 to 425 (DQWNWDNIRE…FRENLLLSDS (69 aa)) is the AGC-kinase C-terminal domain. Residues 363 to 784 (NIRETAAPVV…LNELLKQKDV (422 aa)) form an interaction with PPP1R12A region. The interaction with NPM1 stretch occupies residues 373–420 (PELSSDIDSSNFDDIEDDKGDVETFPIPKAFVGNQLPFIGFTYFRENL). Phosphothreonine; by ROCK2 is present on T414. Coiled-coil stretches lie at residues 439–1024 (SEES…EKQL) and 1052–1131 (SDTD…IGMD). The REM-1 domain maps to 497-573 (TLRQLEREKA…LDEANALLRT (77 aa)). Residues 513–530 (AEYQRKADHEADKKRNLE) are compositionally biased toward basic and acidic residues. Residues 513-532 (AEYQRKADHEADKKRNLEND) are disordered. Position 722 is a phosphotyrosine; by SRC (Y722). A RhoBD domain is found at 979-1047 (TSDVANLANE…LAEIMNRKEP (69 aa)). An RHOA binding region spans residues 979–1047 (TSDVANLANE…LAEIMNRKEP (69 aa)). Residue S1137 is modified to Phosphoserine. Positions 1150–1349 (ESRLEGWLSL…WVSRLVKKIP (200 aa)) constitute a PH domain. A Phosphothreonine modification is found at T1212. A Phorbol-ester/DAG-type zinc finger spans residues 1260-1315 (GHEFIPTLYHFPTNCEACMKPLWHMFKPPPALECSRCHIKCHKDHMDKKEEIIAPC). Residues 1345 to 1388 (VKKIPKKPPAPDPFARSSPRTSMKIQQNQSIRRPSRQLAPNKPS) are disordered. Phosphoserine occurs at positions 1362 and 1374. The segment covering 1362–1376 (SPRTSMKIQQNQSIR) has biased composition (polar residues).

The protein belongs to the protein kinase superfamily. AGC Ser/Thr protein kinase family. In terms of assembly, homodimer. Interacts with IRS1. Interacts with RAF1. Interacts with RHOA (activated by GTP), RHOB, RHOC. Interacts with PPP1R12A. Interacts with EP300. Interacts with CHORDC1. Interacts with BRCA2. Interacts with NPM1; this interaction enhances its activity. Interacts with SORL1. Interacts with PJVK. Mg(2+) is required as a cofactor. In terms of processing, autophosphorylated. Phosphorylation at Tyr-722 reduces its binding to RHOA and is crucial for focal adhesion dynamics. Dephosphorylation by PTPN11 stimulates its RHOA binding activity. Cleaved by granzyme B during apoptosis. This leads to constitutive activation of the kinase and membrane blebbing. As to expression, highly expressed in brain, lung, liver, skeletal muscle, kidney and testis.

Its subcellular location is the cytoplasm. The protein localises to the cell membrane. It localises to the nucleus. The protein resides in the cytoskeleton. It is found in the microtubule organizing center. Its subcellular location is the centrosome. It carries out the reaction L-seryl-[protein] + ATP = O-phospho-L-seryl-[protein] + ADP + H(+). It catalyses the reaction L-threonyl-[protein] + ATP = O-phospho-L-threonyl-[protein] + ADP + H(+). Its activity is regulated as follows. Activated by RHOA binding. Inhibited by Y-27632. Protein kinase which is a key regulator of actin cytoskeleton and cell polarity. Involved in regulation of smooth muscle contraction, actin cytoskeleton organization, stress fiber and focal adhesion formation, neurite retraction, cell adhesion and motility via phosphorylation of ADD1, BRCA2, CNN1, EZR, DPYSL2, EP300, MSN, MYL9/MLC2, NPM1, RDX, PPP1R12A and VIM. Phosphorylates SORL1 and IRF4. Acts as a negative regulator of VEGF-induced angiogenic endothelial cell activation. Positively regulates the activation of p42/MAPK1-p44/MAPK3 and of p90RSK/RPS6KA1 during myogenic differentiation. Plays an important role in the timely initiation of centrosome duplication. Inhibits keratinocyte terminal differentiation. May regulate closure of the eyelids and ventral body wall through organization of actomyosin bundles. Plays a critical role in the regulation of spine and synaptic properties in the hippocampus. Plays a role in placental homeostasis during the perinatal period. Plays an important role in generating the circadian rhythm of the aortic myofilament Ca(2+) sensitivity and vascular contractility by modulating the myosin light chain phosphorylation. In Rattus norvegicus (Rat), this protein is Rho-associated protein kinase 2 (Rock2).